The following is a 338-amino-acid chain: Solute carrier family 35 member G6 (338 aa).

Residues 1–25 are disordered; it reads MAGSHPYLNPPDSTHPSPPSAPPSL. 9 helical membrane passes run 40–60, 67–87, 105–125, 160–180, 190–210, 221–241, 255–275, 281–301, and 310–330; these read LLVA…LSHM, LPSL…ALLL, YFYA…VQVV, CGLL…LWTL, ALGY…LLVY, TVAF…LFVL, CVGA…YAVT, LVCA…YYML, and IVGA…NLSC. Residues 49–174 enclose the EamA 1 domain; the sequence is LPAGFVGPLS…SILGLIIIVG (126 aa). An EamA 2 domain is found at 272 to 325; sequence YAVTKAHPALVCAVLHSEVVVALILQYYMLHETVAPSDIVGAGVVLGSIAIITA.

The protein belongs to the SLC35G solute transporter family. In terms of tissue distribution, expressed in placenta and testis.

It is found in the membrane. This chain is Solute carrier family 35 member G6 (SLC35G6), found in Homo sapiens (Human).